A 562-amino-acid chain; its full sequence is Protein wntless (562 aa).

Over 1-13 (MSGTILENLSGRK) the chain is Cytoplasmic. The helical transmembrane segment at 14–34 (LSILVTTLLLCQVLCFLLGGL) threads the bilayer. Residues 35 to 239 (YAPLPAGHVT…AIHQNGGFTQ (205 aa)) lie on the Lumenal side of the membrane. Asparagine 58 carries an N-linked (GlcNAc...) asparagine glycan. Residues 240 to 260 (IWLLLKTVLFPFVVGIMIWFW) traverse the membrane as a helical segment. Topologically, residues 261–270 (RRVHLLQRSP) are cytoplasmic. A helical membrane pass occupies residues 271-291 (ALLEYMLIYLGAALTFLNLPL). Over 292 to 311 (EYLSLVFEMPYMLLLSDIRQ) the chain is Lumenal. A helical membrane pass occupies residues 312–332 (GIFYAMLLTFWLVFAGEHMLI). At 333–344 (QDAPNKSTIRSR) the chain is on the cytoplasmic side. A helical transmembrane segment spans residues 345–365 (YWKHLSAVVVGCISLFVFDIC). The Lumenal portion of the chain corresponds to 366–390 (ERGVQLRNPFYSIWAMPLAAKMAMT). A helical transmembrane segment spans residues 391–411 (FIVLAGVSAAIYFLFLCYMIW). Over 412–441 (KVFRNIGDKRTSLPSMSQARRLHYESLIYR) the chain is Cytoplasmic. A helical transmembrane segment spans residues 442-462 (FKFLMLATIVCAALTVTGFIM). Topologically, residues 463-482 (GQRAEGQWDWNDNVAIQPTS) are lumenal. Residues 483–503 (AFLTGVYGMWNIYIFALLILY) traverse the membrane as a helical segment. The Cytoplasmic portion of the chain corresponds to 504-562 (APSHKQWPTMHHSDETTQSNENIVASAASEEIEFSHLPSDSNPSEISSLTSFTRKVAFD). The interval 539–562 (HLPSDSNPSEISSLTSFTRKVAFD) is disordered. Residues 541-556 (PSDSNPSEISSLTSFT) show a composition bias toward polar residues.

Belongs to the wntless family. Interacts with wg; in the Golgi. Interacts with Vps35, a component of the retromer complex; wls stability is regulated by Vps35.

The protein localises to the presynaptic cell membrane. It localises to the postsynaptic cell membrane. The protein resides in the cell membrane. It is found in the endoplasmic reticulum membrane. Its subcellular location is the endosome membrane. The protein localises to the golgi apparatus membrane. A segment polarity gene required for wingless (wg)-dependent patterning processes, acting in both wg-sending cells and wg-target cells. In non-neuronal cells wls directs wg secretion. The wls traffic loop encompasses the Golgi, the cell surface, an endocytic compartment and a retrograde route leading back to the Golgi, and involves clathrin-mediated endocytosis and the retromer complex (a conserved protein complex consisting of Vps35 and Vps26). In neuronal cells (the larval motorneuron NMJ), the wg signal moves across the synapse via the release of wls-containing exosome-like vesicles. Postsynaptic wls is required for the trafficking of fz2 through the fz2-interacting protein Grip. In Drosophila erecta (Fruit fly), this protein is Protein wntless.